Reading from the N-terminus, the 465-residue chain is UDP-N-acetylmuramoylalanine--D-glutamate ligase (465 aa).

ATP is bound at residue 116-122; sequence GTNGKTT.

Belongs to the MurCDEF family.

Its subcellular location is the cytoplasm. It catalyses the reaction UDP-N-acetyl-alpha-D-muramoyl-L-alanine + D-glutamate + ATP = UDP-N-acetyl-alpha-D-muramoyl-L-alanyl-D-glutamate + ADP + phosphate + H(+). Its pathway is cell wall biogenesis; peptidoglycan biosynthesis. Cell wall formation. Catalyzes the addition of glutamate to the nucleotide precursor UDP-N-acetylmuramoyl-L-alanine (UMA). The sequence is that of UDP-N-acetylmuramoylalanine--D-glutamate ligase from Thermobifida fusca (strain YX).